The primary structure comprises 471 residues: Major facilitator-type transporter psiT1 (471 aa).

The segment at 1–36 (MNPTTATDAHERTSLLSGRPQSAANSTAPYERQVQP) is disordered. The segment covering 14–36 (SLLSGRPQSAANSTAPYERQVQP) has biased composition (polar residues). Residue asparagine 25 is glycosylated (N-linked (GlcNAc...) asparagine). Helical transmembrane passes span 44-64 (TPVTVITIITLIYRLATTMVI), 108-128 (AIMVSMTTVIDGLGGILGTGI), 140-160 (PVLMFLLSCTMIDHLAILTVQ), 168-188 (LVTFGLIMIVETIGNENTTVF), 212-232 (GWLVLGGALAYSIGGSITTFL), 237-257 (AVYIVSFSVTGIVLTFTAFVL), 322-342 (LHSFIVTLADAYALPAMLIFF), and 356-376 (VMTTYSVSSVFVLAIALPLFI). A glycan (N-linked (GlcNAc...) asparagine) is linked at asparagine 384. Residues 424-444 (VHITVISWTIESLAYIVLGTV) form a helical membrane-spanning segment.

This sequence belongs to the major facilitator superfamily. TCR/Tet family.

It localises to the membrane. Functionally, major facilitator-type transporter; part of the gene cluster that mediates the biosynthesis of psilocybin, a psychotropic tryptamine-derived natural product. This Psilocybe cyanescens protein is Major facilitator-type transporter psiT1.